Reading from the N-terminus, the 286-residue chain is CLA biosynthesis dehydrogenase/reductase (286 aa).

Asp-37, Asp-63, Val-64, Asn-90, Tyr-156, and Lys-160 together coordinate NAD(+). Tyr-156 (proton acceptor) is an active-site residue.

Belongs to the short-chain dehydrogenases/reductases (SDR) family.

It localises to the cytoplasm. The enzyme catalyses (10S)-hydroxy-(12Z)-octadecenoate + NAD(+) = 10-oxo-(12Z)-octadecenoate + NADH + H(+). It catalyses the reaction 10-oxo-(11E)-octadecenoate + NADH + H(+) = 10-hydroxy-(11E)-octadecenoate + NAD(+). It carries out the reaction 10-oxooctadecanoate + NADH + H(+) = 10-hydroxyoctadecanoate + NAD(+). It functions in the pathway lipid metabolism; fatty acid metabolism. In terms of biological role, is involved in a saturation metabolic pathway of polyunsaturated fatty acids, that detoxifies unsaturated fatty acids and generates hydroxy fatty acids, oxo fatty acids, conjugated fatty acids such as conjugated linoleic acids (CLAs), and partially saturated trans-fatty acids as intermediates. CLA-DH catalyzes the dehydrogenation/reduction steps in the production of 10-oxo-(12Z)-octadecenoate, 10-hydroxy-(11E)-octadecenoate and 10-hydroxyoctadecanoate during linoleate metabolism. As part of the gut microbiome, this enzyme modifies host fatty acid composition and is expected to improve human health by altering lipid metabolism related to the onset of metabolic syndrome. The protein is CLA biosynthesis dehydrogenase/reductase of Lactiplantibacillus plantarum (Lactobacillus plantarum).